Here is a 984-residue protein sequence, read N- to C-terminus: Pre-mRNA-splicing factor cwf10 (984 aa).

The tract at residues 1–28 is disordered; that stretch reads MMEEDLYDEFGNYIGPENEEDEEELFPQ. Residues 139-402 form the tr-type G domain; sequence DDVRSFIVAG…HTLTISDEAE (264 aa). The G1 stretch occupies residues 148 to 155; it reads GHLHHGKS. GTP is bound at residue 148–155; the sequence is GHLHHGKS. The segment at 190 to 194 is G2; the sequence is VMSIK. Residues 216–219 are G3; the sequence is DTPG. GTP contacts are provided by residues 216–220 and 270–273; these read DTPGH and NKVD. The tract at residues 270–273 is G4; the sequence is NKVD. The segment at 371-373 is G5; sequence QSL.

The protein belongs to the TRAFAC class translation factor GTPase superfamily. Classic translation factor GTPase family. EF-G/EF-2 subfamily. As to quaternary structure, belongs to the 40S cdc5-associated complex (or cwf complex), a spliceosome sub-complex reminiscent of a late-stage spliceosome composed of the U2, U5 and U6 snRNAs and at least brr2, cdc5, cwf2/prp3, cwf3/syf1, cwf4/syf3, cwf5/ecm2, spp42/cwf6, cwf7/spf27, cwf8, cwf9, cwf10, cwf11, cwf12, prp45/cwf13, cwf14, cwf15, cwf16, cwf17, cwf18, cwf19, cwf20, cwf21, cwf22, cwf23, cwf24, cwf25, cwf26, cyp7/cwf27, cwf28, cwf29/ist3, lea1, msl1, prp5/cwf1, prp10, prp12/sap130, prp17, prp22, sap61, sap62, sap114, sap145, slu7, smb1, smd1, smd3, smf1, smg1 and syf2.

The protein localises to the cytoplasm. It localises to the nucleus. Its function is as follows. Component of the U5 snRNP complex required for pre-mRNA splicing. Binds GTP. The protein is Pre-mRNA-splicing factor cwf10 (cwf10) of Schizosaccharomyces pombe (strain 972 / ATCC 24843) (Fission yeast).